The sequence spans 303 residues: N-acetylmuramic acid 6-phosphate etherase (303 aa).

An SIS domain is found at 62 to 225; it reads IVAAFRQGGR…TTASMVLLGK (164 aa). Glu-90 (proton donor) is an active-site residue. Residue Glu-121 is part of the active site.

It belongs to the GCKR-like family. MurNAc-6-P etherase subfamily. As to quaternary structure, homodimer.

The enzyme catalyses N-acetyl-D-muramate 6-phosphate + H2O = N-acetyl-D-glucosamine 6-phosphate + (R)-lactate. The protein operates within amino-sugar metabolism; 1,6-anhydro-N-acetylmuramate degradation. Its pathway is amino-sugar metabolism; N-acetylmuramate degradation. It functions in the pathway cell wall biogenesis; peptidoglycan recycling. In terms of biological role, specifically catalyzes the cleavage of the D-lactyl ether substituent of MurNAc 6-phosphate, producing GlcNAc 6-phosphate and D-lactate. Together with AnmK, is also required for the utilization of anhydro-N-acetylmuramic acid (anhMurNAc) either imported from the medium or derived from its own cell wall murein, and thus plays a role in cell wall recycling. This chain is N-acetylmuramic acid 6-phosphate etherase, found in Histophilus somni (strain 129Pt) (Haemophilus somnus).